We begin with the raw amino-acid sequence, 239 residues long: Short palate, lung and nasal epithelium carcinoma-associated protein 2A (239 aa).

Positions 1–20 (MVQLWKLVLLCGLLAGTSES) are cleaved as a signal peptide. A disulfide bridge connects residues Cys-166 and Cys-209.

This sequence belongs to the BPI/LBP/Plunc superfamily. Plunc family. As to expression, detected in salivary tissues: parotid, submandibular and sublingual glands.

It is found in the secreted. This chain is Short palate, lung and nasal epithelium carcinoma-associated protein 2A (SPLUNC2A), found in Bos taurus (Bovine).